Consider the following 56-residue polypeptide: Arcadin-3 (56 aa).

The protein localises to the cytoplasm. The protein resides in the cytoskeleton. Part of an actin-like archaeal cytoskeleton. The sequence is that of Arcadin-3 from Pyrobaculum calidifontis (strain DSM 21063 / JCM 11548 / VA1).